The chain runs to 294 residues: Undecaprenyl-diphosphatase (294 aa).

6 helical membrane-spanning segments follow: residues 39 to 59, 93 to 113, 123 to 143, 197 to 217, 234 to 254, and 265 to 285; these read PGAA…ILYF, TQMG…GLLF, NLWI…VVDA, VSFL…AVSA, ATIA…IGFL, and FAIY…CGVL.

The protein belongs to the UppP family.

The protein localises to the cell membrane. The enzyme catalyses di-trans,octa-cis-undecaprenyl diphosphate + H2O = di-trans,octa-cis-undecaprenyl phosphate + phosphate + H(+). Functionally, catalyzes the dephosphorylation of undecaprenyl diphosphate (UPP). Confers resistance to bacitracin. This is Undecaprenyl-diphosphatase from Bifidobacterium adolescentis (strain ATCC 15703 / DSM 20083 / NCTC 11814 / E194a).